The chain runs to 316 residues: ATP synthase gamma chain (316 aa).

This sequence belongs to the ATPase gamma chain family. As to quaternary structure, F-type ATPases have 2 components, CF(1) - the catalytic core - and CF(0) - the membrane proton channel. CF(1) has five subunits: alpha(3), beta(3), gamma(1), delta(1), epsilon(1). CF(0) has three main subunits: a, b and c.

The protein localises to the cellular thylakoid membrane. Functionally, produces ATP from ADP in the presence of a proton gradient across the membrane. The gamma chain is believed to be important in regulating ATPase activity and the flow of protons through the CF(0) complex. The sequence is that of ATP synthase gamma chain from Prochlorococcus marinus (strain MIT 9303).